Here is a 139-residue protein sequence, read N- to C-terminus: Transcription antitermination protein NusB (139 aa).

The protein belongs to the NusB family.

Involved in transcription antitermination. Required for transcription of ribosomal RNA (rRNA) genes. Binds specifically to the boxA antiterminator sequence of the ribosomal RNA (rrn) operons. The sequence is that of Transcription antitermination protein NusB from Lactiplantibacillus plantarum (strain ATCC BAA-793 / NCIMB 8826 / WCFS1) (Lactobacillus plantarum).